The sequence spans 354 residues: MNGTEGENFYVPMSNKTGVVRNPFEYPQYYLADHWMFAVLAAYMFFLIITGFPVNFLTLFVTIQNKKLRQPLNYILLNLAVANLFMVFGGFTTTLITSMNGYFVFGSTGCNLEGFFATLGGEISLWSLVVLAIERYVVVCKPMSNFRFGSQHAIAGVSLTWVMAMACAAPPLVGWSRYIPEGLQCSCGIDYYTPKPEINNVSFVIYMFVVHFSIPLTIIFFCYGRLVCTVKAAAAQQQESETTQRAEREVTRMVVIMVIGFLICWLPYASVALYIFNNQGSEFGPVFMTIPSFFAKSSALYNPLIYILMNKQFRNCMITTLCCGKNPFEEEESTSASASKTEASSVSSSQVSPA.

Residues 1 to 36 (MNGTEGENFYVPMSNKTGVVRNPFEYPQYYLADHWM) lie on the Extracellular side of the membrane. N-linked (GlcNAc...) asparagine glycosylation is found at asparagine 2 and asparagine 15. The helical transmembrane segment at 37-61 (FAVLAAYMFFLIITGFPVNFLTLFV) threads the bilayer. Residues 62-73 (TIQNKKLRQPLN) lie on the Cytoplasmic side of the membrane. Residues 74 to 96 (YILLNLAVANLFMVFGGFTTTLI) form a helical membrane-spanning segment. Topologically, residues 97–110 (TSMNGYFVFGSTGC) are extracellular. A disulfide bridge connects residues cysteine 110 and cysteine 187. Residues 111 to 133 (NLEGFFATLGGEISLWSLVVLAI) form a helical membrane-spanning segment. Residues 134–136 (ERY) carry the 'Ionic lock' involved in activated form stabilization motif. The Cytoplasmic portion of the chain corresponds to 134–152 (ERYVVVCKPMSNFRFGSQH). Residues 153-173 (AIAGVSLTWVMAMACAAPPLV) form a helical membrane-spanning segment. At 174–202 (GWSRYIPEGLQCSCGIDYYTPKPEINNVS) the chain is on the extracellular side. N-linked (GlcNAc...) asparagine glycosylation occurs at asparagine 200. A helical membrane pass occupies residues 203 to 224 (FVIYMFVVHFSIPLTIIFFCYG). Topologically, residues 225-252 (RLVCTVKAAAAQQQESETTQRAEREVTR) are cytoplasmic. The helical transmembrane segment at 253–274 (MVVIMVIGFLICWLPYASVALY) threads the bilayer. The Extracellular segment spans residues 275-286 (IFNNQGSEFGPV). Residues 287-308 (FMTIPSFFAKSSALYNPLIYIL) form a helical membrane-spanning segment. Lysine 296 carries the N6-(retinylidene)lysine modification. Over 309–354 (MNKQFRNCMITTLCCGKNPFEEEESTSASASKTEASSVSSSQVSPA) the chain is Cytoplasmic. S-palmitoyl cysteine attachment occurs at residues cysteine 322 and cysteine 323. The segment at 333–354 (STSASASKTEASSVSSSQVSPA) is disordered. A compositionally biased stretch (low complexity) spans 334–354 (TSASASKTEASSVSSSQVSPA).

Belongs to the G-protein coupled receptor 1 family. Opsin subfamily. Phosphorylated on some or all of the serine and threonine residues present in the C-terminal region. In terms of processing, contains one covalently linked retinal chromophore.

Its subcellular location is the membrane. The protein resides in the cell projection. It is found in the cilium. The protein localises to the photoreceptor outer segment. In terms of biological role, photoreceptor required for image-forming vision at low light intensity. While most salt water fish species use retinal as chromophore, most freshwater fish use 3-dehydroretinal, or a mixture of retinal and 3-dehydroretinal. Light-induced isomerization of 11-cis to all-trans retinal triggers a conformational change that activates signaling via G-proteins. Subsequent receptor phosphorylation mediates displacement of the bound G-protein alpha subunit by arrestin and terminates signaling. The protein is Rhodopsin (rho) of Galeus melastomus (Blackmouth catshark).